Reading from the N-terminus, the 477-residue chain is Secreted RxLR effector protein 102 (477 aa).

Positions 1–20 (MRGGYYVLTALFVVASSEIA) are cleaved as a signal peptide. The short motif at 48–65 (RFLRESRGVHGNVANEER) is the RxLR-dEER element. 4 disordered regions span residues 326–345 (SKGQ…TSKG), 351–370 (IKRS…LPSI), 376–401 (SSKS…KRSR), and 433–455 (PRSA…APSS).

The protein belongs to the RxLR effector family.

The protein resides in the secreted. The protein localises to the host nucleus. In terms of biological role, secreted effector that acts as an elicitor that induces cell death in host plant cells. The sequence is that of Secreted RxLR effector protein 102 from Plasmopara viticola (Downy mildew of grapevine).